A 208-amino-acid polypeptide reads, in one-letter code: Small ribosomal subunit protein uS4 (208 aa).

The S4 RNA-binding domain maps to 95–157 (RRIDNIVYRA…DSLKKLVRSN (63 aa)).

The protein belongs to the universal ribosomal protein uS4 family. In terms of assembly, part of the 30S ribosomal subunit. Contacts protein S5. The interaction surface between S4 and S5 is involved in control of translational fidelity.

Its function is as follows. One of the primary rRNA binding proteins, it binds directly to 16S rRNA where it nucleates assembly of the body of the 30S subunit. Functionally, with S5 and S12 plays an important role in translational accuracy. This chain is Small ribosomal subunit protein uS4, found in Borrelia duttonii (strain Ly).